The primary structure comprises 312 residues: Triacylglycerol lipase (312 aa).

The signal sequence occupies residues 1–25 (MNKIIILIALSLFSSSIWAGTSAHA). The AB hydrolase-1 domain occupies 37–228 (PIVLVHGLFG…VNGVRYYSWS (192 aa)). Position 44 (Leu44) interacts with substrate. Ser110 acts as the Nucleophile in catalysis. His111 contacts substrate. Cys212 and Cys262 are joined by a disulfide. Asp238 contributes to the Ca(2+) binding site. Active-site charge relay system residues include Asp256 and His278. Ca(2+) contacts are provided by Asp280, Gly284, and Ile288.

It belongs to the AB hydrolase superfamily. Pseudomonas lipase family. In terms of assembly, monomer. The cofactor is Ca(2+).

Its subcellular location is the secreted. It catalyses the reaction a triacylglycerol + H2O = a diacylglycerol + a fatty acid + H(+). Its function is as follows. Catalyzes the hydrolysis of triacylglycerol. This Vibrio cholerae serotype O1 (strain ATCC 39315 / El Tor Inaba N16961) protein is Triacylglycerol lipase.